A 217-amino-acid polypeptide reads, in one-letter code: PRA1 family protein B3 (217 aa).

A disordered region spans residues 1-24 (MMANPPTLPISDHSGGGSQSQQPV). A run of 5 helical transmembrane segments spans residues 76 to 96 (LPYF…LSLL), 98 to 118 (HPFS…LYLF), 138 to 158 (LGVL…GSLL), 162 to 182 (LMIG…EDLF), and 193 to 213 (LLSF…STPA).

The protein belongs to the PRA1 family. As to quaternary structure, interacts with PRA1B1, PRA1B2, PRA1B4, PRA1B5, PRA1B6 and PRA1E. As to expression, expressed in hypocotyls and shoot apex.

The protein resides in the endosome membrane. May be involved in both secretory and endocytic intracellular trafficking in the endosomal/prevacuolar compartments. In Arabidopsis thaliana (Mouse-ear cress), this protein is PRA1 family protein B3 (PRA1B3).